We begin with the raw amino-acid sequence, 789 residues long: Probable 3-hydroxyacyl-CoA dehydrogenase (789 aa).

It belongs to the 3-hydroxyacyl-CoA dehydrogenase family.

The enzyme catalyses a (3S)-3-hydroxyacyl-CoA + NAD(+) = a 3-oxoacyl-CoA + NADH + H(+). It participates in lipid metabolism; fatty acid beta-oxidation. Functionally, involved in the degradation of long-chain fatty acids. The chain is Probable 3-hydroxyacyl-CoA dehydrogenase (fadN) from Bacillus subtilis (strain 168).